We begin with the raw amino-acid sequence, 174 residues long: uncharacterized protein (174 aa).

A helical transmembrane segment spans residues 126–146 (AIDEFIITVIPVVLGSGIPLF).

This sequence to B.subtilis YyaP.

It is found in the membrane. This is an uncharacterized protein from Bacillus subtilis (strain 168).